Reading from the N-terminus, the 402-residue chain is Pyridinium-3,5-bisthiocarboxylic acid mononucleotide nickel insertion protein (402 aa).

Belongs to the LarC family.

It carries out the reaction Ni(II)-pyridinium-3,5-bisthiocarboxylate mononucleotide = pyridinium-3,5-bisthiocarboxylate mononucleotide + Ni(2+). Its function is as follows. Involved in the biosynthesis of a nickel-pincer cofactor ((SCS)Ni(II) pincer complex). Binds Ni(2+), and functions in nickel delivery to pyridinium-3,5-bisthiocarboxylic acid mononucleotide (P2TMN), to form the mature cofactor. Is thus probably required for the activation of nickel-pincer cofactor-dependent enzymes. The chain is Pyridinium-3,5-bisthiocarboxylic acid mononucleotide nickel insertion protein from Desulfitobacterium hafniense (strain DSM 10664 / DCB-2).